We begin with the raw amino-acid sequence, 204 residues long: N-(5'-phosphoribosyl)anthranilate isomerase (204 aa).

It belongs to the TrpF family.

It catalyses the reaction N-(5-phospho-beta-D-ribosyl)anthranilate = 1-(2-carboxyphenylamino)-1-deoxy-D-ribulose 5-phosphate. It participates in amino-acid biosynthesis; L-tryptophan biosynthesis; L-tryptophan from chorismate: step 3/5. In Bacillus cereus (strain G9842), this protein is N-(5'-phosphoribosyl)anthranilate isomerase.